The primary structure comprises 129 residues: Large ribosomal subunit protein bL19 (129 aa).

The protein belongs to the bacterial ribosomal protein bL19 family.

In terms of biological role, this protein is located at the 30S-50S ribosomal subunit interface and may play a role in the structure and function of the aminoacyl-tRNA binding site. This chain is Large ribosomal subunit protein bL19, found in Methylobacillus flagellatus (strain ATCC 51484 / DSM 6875 / VKM B-1610 / KT).